Consider the following 311-residue polypeptide: UPF0324 membrane protein VV1_3166 (311 aa).

10 helical membrane passes run 8–28 (FIFALLLCLSPWVSSPTALVL), 51–71 (LLSYSIIGLGFGIQFQQAIAV), 74–94 (DGIGLIVVTIAGTLLLGFLVA), 106–126 (LISAGTAICGGSAIAAVAPAI), 133–153 (IALALATVFVLNSLALFIFPV), 165–185 (FGTWAAIAIHDTSSVVGAASA), 197–217 (LKLARALWIIPVALLSAILFA), 228–248 (LVLPYFIFWYCAAIAFSDLFP), 256–276 (GIFSVAKQALVVCLFLIGCSI), and 289–309 (LIFGLSLWVVISTTSLSWLLL).

This sequence belongs to the UPF0324 family.

The protein localises to the cell membrane. The sequence is that of UPF0324 membrane protein VV1_3166 from Vibrio vulnificus (strain CMCP6).